Here is a 181-residue protein sequence, read N- to C-terminus: Shikimate kinase 2 (181 aa).

G12–T17 serves as a coordination point for ATP. Mg(2+) contacts are provided by T16 and D32. Residues D34, R58, and G79 each coordinate substrate. The interval E112–K126 is LID domain. Residue R120 coordinates ATP. R139 provides a ligand contact to substrate.

The protein belongs to the shikimate kinase family. AroL subfamily. Monomer. Mg(2+) serves as cofactor.

The protein resides in the cytoplasm. It catalyses the reaction shikimate + ATP = 3-phosphoshikimate + ADP + H(+). It participates in metabolic intermediate biosynthesis; chorismate biosynthesis; chorismate from D-erythrose 4-phosphate and phosphoenolpyruvate: step 5/7. Catalyzes the specific phosphorylation of the 3-hydroxyl group of shikimic acid using ATP as a cosubstrate. The sequence is that of Shikimate kinase 2 from Salmonella enteritidis PT4 (strain P125109).